The chain runs to 461 residues: Anthranilate synthase component 1 (461 aa).

Residues Ser-43 and 238–240 (PYM) contribute to the L-tryptophan site. 273-274 (GT) provides a ligand contact to chorismate. Glu-300 contributes to the Mg(2+) binding site. Chorismate-binding positions include Tyr-388, Arg-408, 422 to 424 (GAG), and Gly-424. Glu-437 lines the Mg(2+) pocket.

Belongs to the anthranilate synthase component I family. As to quaternary structure, heterotetramer consisting of two non-identical subunits: a beta subunit (TrpG) and a large alpha subunit (TrpE). Mg(2+) is required as a cofactor.

The catalysed reaction is chorismate + L-glutamine = anthranilate + pyruvate + L-glutamate + H(+). Its pathway is amino-acid biosynthesis; L-tryptophan biosynthesis; L-tryptophan from chorismate: step 1/5. Its activity is regulated as follows. Feedback inhibited by tryptophan. Functionally, part of a heterotetrameric complex that catalyzes the two-step biosynthesis of anthranilate, an intermediate in the biosynthesis of L-tryptophan. In the first step, the glutamine-binding beta subunit (TrpG) of anthranilate synthase (AS) provides the glutamine amidotransferase activity which generates ammonia as a substrate that, along with chorismate, is used in the second step, catalyzed by the large alpha subunit of AS (TrpE) to produce anthranilate. In the absence of TrpG, TrpE can synthesize anthranilate directly from chorismate and high concentrations of ammonia. In Methanothermobacter marburgensis (strain ATCC BAA-927 / DSM 2133 / JCM 14651 / NBRC 100331 / OCM 82 / Marburg) (Methanobacterium thermoautotrophicum), this protein is Anthranilate synthase component 1 (trpE).